A 126-amino-acid chain; its full sequence is Putative phosphotransferase enzyme IIB component UU178 (126 aa).

Residues 11 to 31 form a helical membrane-spanning segment; the sequence is LIIFLGIITFGIFIIYFFTKA. One can recognise a PTS EIIB type-1 domain in the interval 49–126; it reads PFSLNDFYNC…KELIKKDLFS (78 aa).

This sequence to M.genitalium MG129 and M.pneumoniae MPN268.

It localises to the membrane. Its function is as follows. The phosphoenolpyruvate-dependent sugar phosphotransferase system (PTS), a major carbohydrate active -transport system, catalyzes the phosphorylation of incoming sugar substrates concomitant with their translocation across the cell membrane. The chain is Putative phosphotransferase enzyme IIB component UU178 from Ureaplasma parvum serovar 3 (strain ATCC 700970).